The chain runs to 338 residues: Fructose-1,6-bisphosphatase class 1 (338 aa).

Mg(2+)-binding residues include Glu-92, Asp-114, Leu-116, and Asp-117. Substrate-binding positions include 117–120 (DGSS) and Asn-210. A Mg(2+)-binding site is contributed by Glu-284.

Belongs to the FBPase class 1 family. In terms of assembly, homotetramer. It depends on Mg(2+) as a cofactor.

The protein localises to the cytoplasm. The catalysed reaction is beta-D-fructose 1,6-bisphosphate + H2O = beta-D-fructose 6-phosphate + phosphate. It functions in the pathway carbohydrate biosynthesis; gluconeogenesis. The sequence is that of Fructose-1,6-bisphosphatase class 1 from Halorhodospira halophila (strain DSM 244 / SL1) (Ectothiorhodospira halophila (strain DSM 244 / SL1)).